Here is a 738-residue protein sequence, read N- to C-terminus: MDLQQLEEQARQAALKDIQNMLQRPGQLEKVEQYRHRIARKKASVEALLKTGMQGQLDGVRVGLKQLETCMQDVREVRRRMDEVERLLRGVPEVYDALEVVREENTKHSQYATAMENLKHIFNVDASVQKTMALIEDDKLLNAHQCLADLENSRDDLLYELHKQPKQHASDKITLKRHFEKVDTVSQELEKKLRLILSRTLNTLRKKPTIIVTALRIIEREEKNDQFALQQQKVTGFLPPGRPKAWRRMIMDVLQQSVITRIEGSKLEERADNKMWLVRDLEILRQIILEDLRVVKSLCVPCFPPHYDIFGEYVKFYHEGLSSYLDNIVRSGLEGNEYVSMMAWVTHTYPGVELMSHPDLNVDVHRQIGTLLRPEHLKALEDEYLQNMQRNFQEWMTKAAETEKQEWFTETVPDQDEEYYHTSAPVIIFQMIDQHLQVTNTIHQELTFKALVMSIQQVEIFGQTYLKNVIELKEHHFRNRDQIKYFTHYIITIVNNSQQMVELAQQMKQLYWPKSRTEHYEDFERLLATFQRIRAHAASYLLEEAFLDMECHFNDLFTAKWLASNIAVDTICVTLDDYFQDYNHLRPNNFEMVINEAQKLLAKRYIRALLSKRLSKPRAECDAITRKIKTEAKRFKLFFEKIAPKISLSDSPLDLISTLSALLSSDIELLVLDLHTLLGSYPSLNEDHLVRLFYIRNDVKAAEVREKVQDAMKSKKAMVSIAKQDCIFKEIVFSDKLW.

Residues 28 to 91 (LEKVEQYRHR…DEVERLLRGV (64 aa)) are a coiled coil.

Belongs to the SEC6 family. The exocyst complex is composed of Sec3/Exoc1, Sec5/Exoc2, Sec6/Exoc3, Sec8/Exoc4, Sec10/Exoc5, Sec15/Exoc6, Exo70/Exoc7 and Exo84/Exoc8.

Functionally, component of the exocyst complex involved in the docking of exocytic vesicles with fusion sites on the plasma membrane. The sequence is that of Exocyst complex component 3 from Drosophila melanogaster (Fruit fly).